A 2481-amino-acid chain; its full sequence is Tetratricopeptide repeat protein 28 (2481 aa).

The residue at position 1 (methionine 1) is an N-acetylmethionine. The segment covering 1-14 (MEQSPPPAPEPTQG) has biased composition (pro residues). The interval 1–48 (MEQSPPPAPEPTQGPTPARSRRRREPESPPASAPIPLFGADTIGQRSP) is disordered. At serine 28 the chain carries Phosphoserine. TPR repeat units lie at residues 58–91 (FVEK…DPQN), 93–125 (ILYS…NPKW), 126–159 (PKAY…DPKS), 196–229 (FVVV…GTCS), 234–267 (GSVF…AKTL), 274–307 (CRAH…AMKL), 314–347 (SSAL…AKQS), 354–387 (AREL…AKDL), 394–427 (ARAY…AQEL), 434–467 (MRAY…AEDL), 474–507 (GRAS…AQEL), 514–547 (GRAY…SMEV), 554–587 (ASTH…AREL), 594–627 (ARAL…APDL), 634–667 (GKVC…AKDL), 674–707 (AKAY…AQSL), 714–747 (FRAL…AHQV), 754–787 (ASAY…YQEL), 794–827 (CRAH…GQKL), 834–867 (AQVY…LQQL), 877–910 (GRAY…AQSL), 917–950 (AKAY…AHEL), 957–990 (AQAY…ARDM), 997–1030 (SDAA…AEET), 1037–1070 (GRAY…AAQM), 1077–1110 (TVSY…AEQL), 1117–1150 (AKIR…FETI), and 1169–1202 (TSSY…AFAD). Serine 1590 bears the Phosphoserine mark. 3 disordered regions span residues 2004-2055 (FVSK…DEEE), 2075-2161 (NTCF…DPQE), and 2176-2339 (AVER…PADA). 2 stretches are compositionally biased toward polar residues: residues 2029-2043 (AYLQ…QLPP) and 2096-2122 (SVSS…NSPF). A Phosphoserine modification is found at serine 2104. A compositionally biased stretch (low complexity) spans 2130–2146 (SSDTGESDQSSTETDST). Residues 2149–2159 (SQEESNPKLDP) show a composition bias toward basic and acidic residues. Over residues 2183 to 2214 (SGGQVSKSNNPEDGVQAPSSTAVFRASETSAF) the composition is skewed to polar residues. Phosphoserine occurs at positions 2224 and 2251. Residues 2238–2282 (RSSSLPKVSSGYSSPTTSEMSIKDSPSQHSGRPSPGCDSQTSQLD) show a composition bias toward polar residues. A compositionally biased stretch (low complexity) spans 2307-2339 (SPSSGHQSPAGSAPSPALSYSSAGSARSSPADA). Phosphoserine occurs at positions 2393 and 2398. The segment at 2420–2467 (QHDGAPPKAPPNGHWRTETTSLGSLPLPAGPPATAPARPLRLPSGNGY) is disordered.

In terms of assembly, interacts with AURKB. Widely expressed in fetal tissues. In adult tissues, expressed in testis and ovary and, at much lower levels, in kidney and pancreas.

The protein localises to the cytoplasm. Its subcellular location is the cytoskeleton. It is found in the microtubule organizing center. It localises to the centrosome. The protein resides in the spindle. The protein localises to the spindle pole. Its subcellular location is the midbody. During mitosis, may be involved in the condensation of spindle midzone microtubules, leading to the formation of midbody. The chain is Tetratricopeptide repeat protein 28 (TTC28) from Homo sapiens (Human).